The chain runs to 313 residues: Malate dehydrogenase (313 aa).

Residues 8 to 13 (GAGNVG) and Asp33 each bind NAD(+). Substrate contacts are provided by Arg83 and Arg89. NAD(+) is bound by residues Asn96 and 119-121 (ISN). The substrate site is built by Asn121 and Arg152. Catalysis depends on His176, which acts as the Proton acceptor.

It belongs to the LDH/MDH superfamily. MDH type 3 family.

The enzyme catalyses (S)-malate + NAD(+) = oxaloacetate + NADH + H(+). Catalyzes the reversible oxidation of malate to oxaloacetate. This Bacteroides thetaiotaomicron (strain ATCC 29148 / DSM 2079 / JCM 5827 / CCUG 10774 / NCTC 10582 / VPI-5482 / E50) protein is Malate dehydrogenase.